A 537-amino-acid polypeptide reads, in one-letter code: Phosphoenolpyruvate carboxykinase (ATP) (537 aa).

Positions 61, 195, and 201 each coordinate substrate. ATP is bound by residues Lys201, His220, and 236-244 (GLSGTGKTT). Mn(2+) is bound by residues Lys201 and His220. Asp257 contributes to the Mn(2+) binding site. ATP-binding residues include Glu285, Arg323, and Thr448. Position 323 (Arg323) interacts with substrate.

Belongs to the phosphoenolpyruvate carboxykinase (ATP) family. Mn(2+) is required as a cofactor.

The protein resides in the cytoplasm. It catalyses the reaction oxaloacetate + ATP = phosphoenolpyruvate + ADP + CO2. It participates in carbohydrate biosynthesis; gluconeogenesis. Its function is as follows. Involved in the gluconeogenesis. Catalyzes the conversion of oxaloacetate (OAA) to phosphoenolpyruvate (PEP) through direct phosphoryl transfer between the nucleoside triphosphate and OAA. This Rhodopseudomonas palustris (strain HaA2) protein is Phosphoenolpyruvate carboxykinase (ATP).